The following is a 248-amino-acid chain: Myelin protein P0 (248 aa).

A signal peptide spans 1–29 (MAPGAPSSSPSPILAALLFSSLVLSPTLA). The region spanning 30-143 (IVVYTDREVY…DIVGKTSQVT (114 aa)) is the Ig-like V-type domain. The Extracellular portion of the chain corresponds to 30 to 153 (IVVYTDREVY…LYVFEKVPTR (124 aa)). C50 and C127 are joined by a disulfide. N122 carries N-linked (GlcNAc...) (complex) asparagine glycosylation. The helical transmembrane segment at 154-179 (YGVVLGAVIGGILGVVLLLLLLFYLI) threads the bilayer. Topologically, residues 180–248 (RYCWLRRQAA…GLGESRKDKK (69 aa)) are cytoplasmic. At S210 the chain carries Phosphoserine; by PKC. A disordered region spans residues 222–248 (MLDHSRSTKAASEKKSKGLGESRKDKK). Over residues 224–248 (DHSRSTKAASEKKSKGLGESRKDKK) the composition is skewed to basic and acidic residues. Phosphoserine is present on residues S226 and S228. Phosphoserine; by PKC is present on S233. S237 bears the Phosphoserine mark. S243 is modified (phosphoserine; by PKC).

Belongs to the myelin P0 protein family. In terms of assembly, homodimer and homotetramer. N-glycosylated; contains sulfate-substituted glycan. As to expression, found only in peripheral nervous system Schwann cells.

The protein resides in the cell membrane. In terms of biological role, is an adhesion molecule necessary for normal myelination in the peripheral nervous system. It mediates adhesion between adjacent myelin wraps and ultimately drives myelin compaction. The protein is Myelin protein P0 (Mpz) of Rattus norvegicus (Rat).